The primary structure comprises 99 residues: Large ribosomal subunit protein uL23 (99 aa).

It belongs to the universal ribosomal protein uL23 family. As to quaternary structure, part of the 50S ribosomal subunit. Contacts protein L29, and trigger factor when it is bound to the ribosome.

Its function is as follows. One of the early assembly proteins it binds 23S rRNA. One of the proteins that surrounds the polypeptide exit tunnel on the outside of the ribosome. Forms the main docking site for trigger factor binding to the ribosome. The sequence is that of Large ribosomal subunit protein uL23 from Francisella tularensis subsp. holarctica (strain OSU18).